Reading from the N-terminus, the 883-residue chain is Phosphoenolpyruvate carboxylase (883 aa).

Active-site residues include His-138 and Lys-546.

Belongs to the PEPCase type 1 family. The cofactor is Mg(2+).

It carries out the reaction oxaloacetate + phosphate = phosphoenolpyruvate + hydrogencarbonate. In terms of biological role, forms oxaloacetate, a four-carbon dicarboxylic acid source for the tricarboxylic acid cycle. The polypeptide is Phosphoenolpyruvate carboxylase (Escherichia coli O81 (strain ED1a)).